Consider the following 199-residue polypeptide: N-(5'-phosphoribosyl)anthranilate isomerase (199 aa).

Belongs to the TrpF family.

The catalysed reaction is N-(5-phospho-beta-D-ribosyl)anthranilate = 1-(2-carboxyphenylamino)-1-deoxy-D-ribulose 5-phosphate. It participates in amino-acid biosynthesis; L-tryptophan biosynthesis; L-tryptophan from chorismate: step 3/5. The polypeptide is N-(5'-phosphoribosyl)anthranilate isomerase (Solibacter usitatus (strain Ellin6076)).